The primary structure comprises 333 residues: Foldase protein PrsA (333 aa).

A signal peptide spans 1-22 (MKKSTKLLAGIVTLASAMTLAA). The N-palmitoyl cysteine moiety is linked to residue Cys-23. Cys-23 carries S-diacylglycerol cysteine lipidation. Positions 145-240 (TPEMTTQVIT…NKFYIVKVTK (96 aa)) constitute a PpiC domain. Positions 301–333 (DKKASKANTSKSDQKTSSDSSKDSQSSKSKSEK) are disordered. The segment covering 312-322 (SDQKTSSDSSK) has biased composition (basic and acidic residues). Positions 323–333 (DSQSSKSKSEK) are enriched in low complexity.

Belongs to the PrsA family.

The protein localises to the cell membrane. It catalyses the reaction [protein]-peptidylproline (omega=180) = [protein]-peptidylproline (omega=0). Plays a major role in protein secretion by helping the post-translocational extracellular folding of several secreted proteins. This chain is Foldase protein PrsA, found in Streptococcus equi subsp. zooepidemicus (strain MGCS10565).